Here is a 957-residue protein sequence, read N- to C-terminus: Iron-responsive element-binding protein 2 (957 aa).

Residues Cys-506, Cys-572, and Cys-575 each contribute to the [4Fe-4S] cluster site.

Belongs to the aconitase/IPM isomerase family. The cofactor is [4Fe-4S] cluster. In terms of processing, ubiquitinated and degraded by the proteasome in presence of high level of iron and oxygen.

It localises to the cytoplasm. Its function is as follows. RNA-binding protein that binds to iron-responsive elements (IRES), which are stem-loop structures found in the 5'-UTR of ferritin, and delta aminolevulinic acid synthase mRNAs, and in the 3'-UTR of transferrin receptor mRNA. Binding to the IRE element in ferritin results in the repression of its mRNA translation. Binding of the protein to the transferrin receptor mRNA inhibits the degradation of this otherwise rapidly degraded mRNA. In Xenopus tropicalis (Western clawed frog), this protein is Iron-responsive element-binding protein 2 (ireb2).